Consider the following 458-residue polypeptide: MKVLFAAAECAPLAKVGGMADVVGSLPLALAEMGLDVRIILPYYGFLGELPKSEQPVWTGGAMFQQVEIYEARLPGSDIPLYLVGHPAFANERIYGFEDEAWRFTLFSRTVAEFLWRGGWDPQVLHCHDWHTGLLPLWMRSMPVMTVFTIHNLAYQGPPLPYFRAFVDVPYDTGAWNPMVAGIIHSDAITAVSPTYAREICTPEYGERLDGLLRGQGNRLTGILNGINTKALDPATDKHLTVNYDTTSLDRRVENKLALQREFGFEVSADRLLVGIVSRLVDQKGFDLLAPLWDNWMHTSGAQLVVLGSGDPFYEFLFRSAAERYPDRIKAVLSYNVPIAQRIYGGADLFLMPSRFEPCGIGQMIALRYGAVPLVRKTGGLADTVFFHNPLDEKGNGFLFDRYDPANLLAMLYRAEEAFRYKDYWRRLQLRGMEADLSWRASAHQYADLYKSLIARLG.

ADP-alpha-D-glucose is bound at residue Lys15.

The protein belongs to the glycosyltransferase 1 family. Bacterial/plant glycogen synthase subfamily.

It carries out the reaction [(1-&gt;4)-alpha-D-glucosyl](n) + ADP-alpha-D-glucose = [(1-&gt;4)-alpha-D-glucosyl](n+1) + ADP + H(+). Its pathway is glycan biosynthesis; glycogen biosynthesis. Synthesizes alpha-1,4-glucan chains using ADP-glucose. This chain is Glycogen synthase, found in Gloeobacter violaceus (strain ATCC 29082 / PCC 7421).